Here is a 66-residue protein sequence, read N- to C-terminus: MILVNVHAGNCDNTLKNFKKKLQRELYFRKMKEQRYYEPKSVKRVRKAQEAARRKRKFARKRMYED.

The tract at residues 47–66 (KAQEAARRKRKFARKRMYED) is disordered. The segment covering 53–66 (RRKRKFARKRMYED) has biased composition (basic residues).

It belongs to the bacterial ribosomal protein bS21 family.

The sequence is that of Small ribosomal subunit protein bS21 from Rickettsia bellii (strain RML369-C).